The chain runs to 445 residues: Probable D-serine dehydratase (445 aa).

An N6-(pyridoxal phosphate)lysine modification is found at lysine 116.

The protein belongs to the serine/threonine dehydratase family. DsdA subfamily. The cofactor is pyridoxal 5'-phosphate.

The enzyme catalyses D-serine = pyruvate + NH4(+). The protein is Probable D-serine dehydratase of Bacillus mycoides (strain KBAB4) (Bacillus weihenstephanensis).